We begin with the raw amino-acid sequence, 239 residues long: Ribosomal RNA small subunit methyltransferase G (239 aa).

Residues Gly-77, Phe-82, 128 to 129, and Arg-146 each bind S-adenosyl-L-methionine; that span reads AE. The tract at residues 215-239 is disordered; it reads DKKRQTPKKYPRKPGTPNKTPLLEK.

Belongs to the methyltransferase superfamily. RNA methyltransferase RsmG family.

The protein localises to the cytoplasm. Specifically methylates the N7 position of guanine in position 535 of 16S rRNA. This is Ribosomal RNA small subunit methyltransferase G from Staphylococcus aureus (strain USA300).